Consider the following 101-residue polypeptide: Large ribosomal subunit protein uL24 (101 aa).

The protein belongs to the universal ribosomal protein uL24 family. Part of the 50S ribosomal subunit.

One of two assembly initiator proteins, it binds directly to the 5'-end of the 23S rRNA, where it nucleates assembly of the 50S subunit. Functionally, one of the proteins that surrounds the polypeptide exit tunnel on the outside of the subunit. This is Large ribosomal subunit protein uL24 from Streptococcus pyogenes serotype M1.